The following is a 141-amino-acid chain: Protein NrdI (141 aa).

This sequence belongs to the NrdI family.

Functionally, probably involved in ribonucleotide reductase function. In Bifidobacterium animalis subsp. lactis (strain AD011), this protein is Protein NrdI.